We begin with the raw amino-acid sequence, 371 residues long: MENAMETKHSNRARSRKGALRGAVLAGALMALVGCQTSPAATTSSNTGGTNMQLQLTQEWDKTFPLSAKVEHRKVTFANRYGITLAADLYLPKNRGGDRLPAIVIGGPFGAVKEQSSGLYAQTMAERGFVTLAFDPSYTGESGGQPRNVASPDINTEDFSAAVDFISLLPEVNRERIGVIGICGWGGMALNAVAVDKRVKAVVTSTMYDMTRVMSKGYNDSVTLEQRTRTLEQLGQQRWKDAESGTPAYQPPYNELKGGEAQFLVDYHDYYMTPRGYHPRAVNSGNAWTMTTPLSFMNMPILTYIKEISPRPILLIHGERAHSRYFSETAYAAAAEPKELLIVPGASHVDLYDRLDRIPFDRIAGFFDEHL.

The protein to E.coli YcjY.

This is an uncharacterized protein from Pseudomonas aeruginosa (strain ATCC 15692 / DSM 22644 / CIP 104116 / JCM 14847 / LMG 12228 / 1C / PRS 101 / PAO1).